The chain runs to 314 residues: Malate dehydrogenase (314 aa).

Residues 11 to 16 and aspartate 35 each bind NAD(+); that span reads GSGNIG. Residues arginine 84 and arginine 90 each contribute to the substrate site. NAD(+)-binding positions include asparagine 97 and 120–122; that span reads ITN. 2 residues coordinate substrate: asparagine 122 and arginine 153. Histidine 177 acts as the Proton acceptor in catalysis.

This sequence belongs to the LDH/MDH superfamily. MDH type 3 family.

The enzyme catalyses (S)-malate + NAD(+) = oxaloacetate + NADH + H(+). Its function is as follows. Catalyzes the reversible oxidation of malate to oxaloacetate. The polypeptide is Malate dehydrogenase (Rickettsia bellii (strain RML369-C)).